A 178-amino-acid chain; its full sequence is ATP synthase subunit delta (178 aa).

Belongs to the ATPase delta chain family. As to quaternary structure, F-type ATPases have 2 components, F(1) - the catalytic core - and F(0) - the membrane proton channel. F(1) has five subunits: alpha(3), beta(3), gamma(1), delta(1), epsilon(1). F(0) has three main subunits: a(1), b(2) and c(10-14). The alpha and beta chains form an alternating ring which encloses part of the gamma chain. F(1) is attached to F(0) by a central stalk formed by the gamma and epsilon chains, while a peripheral stalk is formed by the delta and b chains.

Its subcellular location is the cell inner membrane. F(1)F(0) ATP synthase produces ATP from ADP in the presence of a proton or sodium gradient. F-type ATPases consist of two structural domains, F(1) containing the extramembraneous catalytic core and F(0) containing the membrane proton channel, linked together by a central stalk and a peripheral stalk. During catalysis, ATP synthesis in the catalytic domain of F(1) is coupled via a rotary mechanism of the central stalk subunits to proton translocation. Its function is as follows. This protein is part of the stalk that links CF(0) to CF(1). It either transmits conformational changes from CF(0) to CF(1) or is implicated in proton conduction. This chain is ATP synthase subunit delta, found in Acinetobacter baylyi (strain ATCC 33305 / BD413 / ADP1).